We begin with the raw amino-acid sequence, 101 residues long: Large ribosomal subunit protein uL24 (101 aa).

The protein belongs to the universal ribosomal protein uL24 family. In terms of assembly, part of the 50S ribosomal subunit.

Its function is as follows. One of two assembly initiator proteins, it binds directly to the 5'-end of the 23S rRNA, where it nucleates assembly of the 50S subunit. In terms of biological role, one of the proteins that surrounds the polypeptide exit tunnel on the outside of the subunit. This Streptococcus gordonii (strain Challis / ATCC 35105 / BCRC 15272 / CH1 / DL1 / V288) protein is Large ribosomal subunit protein uL24.